Reading from the N-terminus, the 460-residue chain is Lipase member H (460 aa).

A signal peptide spans 1 to 24 (MLLRFYFNGLLFVGCLLSWGRSDT). N-linked (GlcNAc...) asparagine glycosylation is found at Asn-67 and Asn-75. Ser-163 functions as the Nucleophile in the catalytic mechanism. Asn-177 is a glycosylation site (N-linked (GlcNAc...) asparagine). Asp-187 functions as the Charge relay system in the catalytic mechanism. A disulfide bridge links Cys-242 with Cys-255. His-257 (charge relay system) is an active-site residue. Cystine bridges form between Cys-279-Cys-290 and Cys-293-Cys-301. Asn-289 carries an N-linked (GlcNAc...) asparagine glycan. Asn-366 carries N-linked (GlcNAc...) asparagine glycosylation. A disulfide bond links Cys-436 and Cys-455.

The protein belongs to the AB hydrolase superfamily. Lipase family.

The protein localises to the secreted. It is found in the cell membrane. It carries out the reaction 1-hexadecanoyl-2-(9Z-octadecenoyl)-sn-glycero-3-phosphate + H2O = 2-(9Z-octadecenoyl)-sn-glycero-3-phosphate + hexadecanoate + H(+). In terms of biological role, hydrolyzes specifically phosphatidic acid (PA) to produce 2-acyl lysophosphatidic acid (LPA; a potent bioactive lipid mediator) and fatty acid. Does not hydrolyze other phospholipids, like phosphatidylserine (PS), phosphatidylcholine (PC) and phosphatidylethanolamine (PE) or triacylglycerol (TG). In Xenopus tropicalis (Western clawed frog), this protein is Lipase member H (liph).